The primary structure comprises 123 residues: MMSALFLVLSVSLLVSGLQGIGEATSEIKESPLCSLMEERLPDLCEVQVKIDPHYCQDHFSSCPRTCLRCKRPQKPPAPPRECKDLRTDCPRAMHSYGMDICREMSSYASMYCKSYCKLCNKR.

The N-terminal stretch at 1-17 (MMSALFLVLSVSLLVSG) is a signal peptide.

In terms of processing, contains 6 disulfide bonds. As to expression, expressed in acontia, a specialised envenomation structure laden with batteries of venom-containing nematocysts found only in the superfamily Metridioidea.

Its subcellular location is the secreted. It is found in the nematocyst. In terms of biological role, cysteine-rich protein with probable toxin activity. The chain is Unknown 12C protein from Calliactis polypus (Hermit crab anemone).